A 298-amino-acid polypeptide reads, in one-letter code: Homoserine kinase (298 aa).

83–93 (PVSRGLGSSST) is an ATP binding site.

Belongs to the GHMP kinase family. Homoserine kinase subfamily.

Its subcellular location is the cytoplasm. It catalyses the reaction L-homoserine + ATP = O-phospho-L-homoserine + ADP + H(+). Its pathway is amino-acid biosynthesis; L-threonine biosynthesis; L-threonine from L-aspartate: step 4/5. Functionally, catalyzes the ATP-dependent phosphorylation of L-homoserine to L-homoserine phosphate. The protein is Homoserine kinase of Clostridium beijerinckii (strain ATCC 51743 / NCIMB 8052) (Clostridium acetobutylicum).